The following is a 411-amino-acid chain: Stearoyl-[acyl-carrier-protein] 9-desaturase 2, chloroplastic (411 aa).

The N-terminal 44 residues, 1–44, are a transit peptide targeting the chloroplast; the sequence is MALLLNSTITVAMKQNPLVAVSFPRTTCLGSSFSPPRLLRVSCV. Fe cation contacts are provided by E148, E186, H189, E239, E272, and H275.

The protein belongs to the fatty acid desaturase type 2 family. Homodimer. The cofactor is Fe(2+). As to expression, preferentially expressed in roots and flowers.

It localises to the plastid. Its subcellular location is the chloroplast. It carries out the reaction octadecanoyl-[ACP] + 2 reduced [2Fe-2S]-[ferredoxin] + O2 + 2 H(+) = (9Z)-octadecenoyl-[ACP] + 2 oxidized [2Fe-2S]-[ferredoxin] + 2 H2O. It participates in lipid metabolism; fatty acid metabolism. Its function is as follows. Converts stearoyl-ACP to oleoyl-ACP by introduction of a cis double bond between carbons 9 and 10 of the acyl chain. Exhibits delta-9 palmitoyl-[acyl-carrier-protein] desaturase (PAD) activity. Involved in omega-7 monounsaturated fatty acid biosynthesis, especially in the endosperm oil. This chain is Stearoyl-[acyl-carrier-protein] 9-desaturase 2, chloroplastic (S-ACP-DES2), found in Arabidopsis thaliana (Mouse-ear cress).